A 68-amino-acid polypeptide reads, in one-letter code: Antimicrobial peptide UyCT5 (68 aa).

The first 23 residues, 1 to 23, serve as a signal peptide directing secretion; it reads MKNQFAILLLAVVFLQLISQSDA. Position 36 is a leucine amide (leucine 36). Residues 40–68 constitute a propeptide that is removed on maturation; that stretch reads GLKNADRLDELFDGDISDADLDFLRELMR.

It belongs to the non-disulfide-bridged peptide (NDBP) superfamily. Short antimicrobial peptide (group 4) family. In terms of tissue distribution, expressed by the venom gland.

Its subcellular location is the secreted. It localises to the target cell membrane. Antimicrobial peptide that inhibits the growth of Gram-positive (S.aureus, MIC=1 uM) and Gram-negative bacteria (E.coli, MIC=15 uM and P.aeruginosa, MIC=2 uM). It also shows 37% of hemolysis when 15 uM are tested (93% at 50 uM). The polypeptide is Antimicrobial peptide UyCT5 (Urodacus yaschenkoi (Inland robust scorpion)).